The chain runs to 239 residues: Sugar fermentation stimulation protein homolog (239 aa).

This sequence belongs to the SfsA family.

The protein is Sugar fermentation stimulation protein homolog of Methanobrevibacter smithii (strain ATCC 35061 / DSM 861 / OCM 144 / PS).